The following is a 561-amino-acid chain: Lysine--tRNA ligase (561 aa).

Residues Glu-409 and Glu-416 each contribute to the Mg(2+) site.

It belongs to the class-II aminoacyl-tRNA synthetase family. In terms of assembly, homodimer. Mg(2+) serves as cofactor.

The protein resides in the cytoplasm. It catalyses the reaction tRNA(Lys) + L-lysine + ATP = L-lysyl-tRNA(Lys) + AMP + diphosphate. In Nostoc sp. (strain PCC 7120 / SAG 25.82 / UTEX 2576), this protein is Lysine--tRNA ligase.